A 656-amino-acid chain; its full sequence is Replication protein A 70 kDa DNA-binding subunit A (656 aa).

Positions 225–307 (AIKARVTAKG…NHLNNEWEIL (83 aa)) form a DNA-binding region, OB. A C4-type zinc finger spans residues 516–542 (CPNMIGDRQCNKKVTKSTNGNWTCDKC).

Belongs to the replication factor A protein 1 family. Heterotrimer of RPA1, RPA2 and RPA3 (canonical replication protein A complex). Interacts with RPA2B. Expressed in root tips, roots, shoot apical meristem (SAM), young leaves, flag leaves and ears, and at lower levels in mature leaves.

Its subcellular location is the nucleus. Its function is as follows. Component of the replication protein A complex (RPA) required for DNA recombination, repair and replication. The activity of RPA is mediated by single-stranded DNA binding and protein interactions. Plays an essential role in meiotic and somatic DNA repair, but is dispensable for DNA replication and homologous recombination. Is essential for normal progression through meiosis in pollen mother cells. Is involved in repair of double-strand DNA breaks (DSBs) induced by genotoxic stresses. The sequence is that of Replication protein A 70 kDa DNA-binding subunit A (RPA1A) from Oryza sativa subsp. japonica (Rice).